A 118-amino-acid polypeptide reads, in one-letter code: Small ribosomal subunit protein bS6 (118 aa).

Belongs to the bacterial ribosomal protein bS6 family.

Binds together with bS18 to 16S ribosomal RNA. The sequence is that of Small ribosomal subunit protein bS6 from Orientia tsutsugamushi (strain Ikeda) (Rickettsia tsutsugamushi).